We begin with the raw amino-acid sequence, 102 residues long: ATP-dependent Clp protease adapter protein ClpS (102 aa).

It belongs to the ClpS family. In terms of assembly, binds to the N-terminal domain of the chaperone ClpA.

Involved in the modulation of the specificity of the ClpAP-mediated ATP-dependent protein degradation. The polypeptide is ATP-dependent Clp protease adapter protein ClpS (Shewanella amazonensis (strain ATCC BAA-1098 / SB2B)).